The primary structure comprises 307 residues: Putative serpin A13 (307 aa).

Positions 1-21 are cleaved as a signal peptide; the sequence is MEASRWWLLVTVLMAGAHCVA. N-linked (GlcNAc...) asparagine glycans are attached at residues asparagine 150 and asparagine 250.

The protein belongs to the serpin family.

The protein resides in the secreted. This chain is Putative serpin A13 (SERPINA13P), found in Homo sapiens (Human).